The sequence spans 249 residues: Type I iodothyronine deiodinase (249 aa).

Over 1 to 12 the chain is Extracellular; the sequence is MELPLPGLWLKR. The chain crosses the membrane as a helical; Signal-anchor for type III membrane protein span at residues 13–33; the sequence is LWVLFQVALHVAMGKVLMTLF. Residues 34-249 lie on the Cytoplasmic side of the membrane; sequence PGRVKQDILA…VRAVLEKLHS (216 aa). U126 is a catalytic residue. A non-standard amino acid (selenocysteine) is located at residue U126.

It belongs to the iodothyronine deiodinase family. In terms of assembly, predominantly monomer. Can form homodimers but homodimerization is not essential for enzyme activity.

The protein resides in the cell membrane. Its subcellular location is the endoplasmic reticulum membrane. It localises to the basolateral cell membrane. The catalysed reaction is 3,3',5-triiodo-L-thyronine + iodide + A + H(+) = L-thyroxine + AH2. The enzyme catalyses 3,3',5'-triiodo-L-thyronine + iodide + A + H(+) = L-thyroxine + AH2. It carries out the reaction 3,3'-diiodo-L-thyronine + iodide + A + H(+) = 3,3',5'-triiodo-L-thyronine + AH2. It catalyses the reaction 3,3'-diiodo-L-thyronine + iodide + A + H(+) = 3,3',5-triiodo-L-thyronine + AH2. The catalysed reaction is 3'-iodo-L-thyronine + iodide + A + H(+) = 3',5'-diiodo-L-thyronine + AH2. The enzyme catalyses 3-iodo-L-thyronine + iodide + A + H(+) = 3,5-diiodo-L-thyronine + AH2. It carries out the reaction 3-iodo-L-thyronine + iodide + A + H(+) = 3,3'-diiodo-L-thyronine + AH2. It catalyses the reaction 3,3'-diiodothyronamine + iodide + A + H(+) = 3,3',5'-triiodothyronamine + AH2. The catalysed reaction is 3'-iodothyronamine + iodide + A + H(+) = 3',5'-diiodothyronamine + AH2. The enzyme catalyses 3-iodothyronamine + iodide + A + H(+) = 3,3'-diiodothyronamine + AH2. It carries out the reaction 3,3'-diiodothyronamine + iodide + A + H(+) = 3,3',5-triiodothyronamine + AH2. It catalyses the reaction 3-iodothyronamine + iodide + A + H(+) = 3,5-diiodothyronamine + AH2. The catalysed reaction is 3,3'-diiodo-L-thyronine sulfate + iodide + A + H(+) = 3,3',5'-triiodo-L-thyronine sulfate + AH2. The enzyme catalyses 3,3',5'-triiodo-L-thyronine sulfate + iodide + A + H(+) = L-thyroxine sulfate + AH2. It carries out the reaction 3,3'-diiodo-L-thyronine sulfate + iodide + A + H(+) = 3,3',5-triiodo-L-thyronine sulfate + AH2. Functionally, plays a crucial role in the metabolism of thyroid hormones (TH) and has specific roles in TH activation and inactivation by deiodination. Catalyzes the deiodination of L-thyroxine (T4) to 3,5,3'-triiodothyronine (T3) and 3,3',5'-triiodothyronine (rT3) to 3,3'-diiodothyronine (3,3'-T2) via outer-ring deiodination (ORD). Catalyzes the deiodination of T4 to rT3, T3 to 3,3'-T2, 3,5-diiodothyronine (3,5-T2) to 3-monoiodothyronine (3-T1) and 3,3'-T2 to 3-T1 via inner-ring deiodination (IRD). Catalyzes the deiodination of 3',5'-diiodothyronine (3',5'-T2) to 3'-monoiodothyronine (3'-T1) via ORD. Catalyzes the phenolic ring deiodinations of 3,3',5'-triiodothyronamine, 3',5'-diiodothyronamine and 3,3'-diiodothyronamine as well as tyrosyl ring deiodinations of 3,5,3'-triiodothyronamine and 3,5-diiodothyronamine. Catalyzes the deiodination of L-thyroxine sulfate and 3,3',5-triiodo-L-thyronine sulfate via IRD and of 3,3',5'-triiodo-L-thyronine sulfate via ORD. The polypeptide is Type I iodothyronine deiodinase (DIO1) (Sus scrofa (Pig)).